The following is a 244-amino-acid chain: Phosphoadenosine 5'-phosphosulfate reductase (244 aa).

Cysteine 239 serves as the catalytic Nucleophile; cysteine thiosulfonate intermediate.

Belongs to the PAPS reductase family. CysH subfamily.

The protein resides in the cytoplasm. The enzyme catalyses [thioredoxin]-disulfide + sulfite + adenosine 3',5'-bisphosphate + 2 H(+) = [thioredoxin]-dithiol + 3'-phosphoadenylyl sulfate. It functions in the pathway sulfur metabolism; hydrogen sulfide biosynthesis; sulfite from sulfate: step 3/3. Its function is as follows. Catalyzes the formation of sulfite from phosphoadenosine 5'-phosphosulfate (PAPS) using thioredoxin as an electron donor. This Photorhabdus laumondii subsp. laumondii (strain DSM 15139 / CIP 105565 / TT01) (Photorhabdus luminescens subsp. laumondii) protein is Phosphoadenosine 5'-phosphosulfate reductase.